The primary structure comprises 748 residues: SNF-related serine/threonine-protein kinase (748 aa).

The 254-residue stretch at 16–269 (YDLDKTLGRG…LEEIESHPWL (254 aa)) folds into the Protein kinase domain. Residues 22 to 30 (LGRGHFAVV) and lysine 45 contribute to the ATP site. The active-site Proton acceptor is aspartate 139. Position 162 is a phosphoserine (serine 162). Threonine 173 carries the phosphothreonine; by LKB1 modification. In terms of domain architecture, UBA spans 291–334 (SEEEHNSIIQRMVLGDIADRDAIVEALETNRYNHITATYFLLAE). Phosphoserine occurs at positions 362, 390, 482, 495, and 518. The disordered stretch occupies residues 383-415 (SHATVPQSPARAGDNVLNGHRSKGLCDPAKKDE). The span at 491–503 (EEGESDDEFDMDE) shows a compositional bias: acidic residues. Positions 491–640 (EEGESDDEFD…SPSPASASAA (150 aa)) are disordered. Residues 522–532 (VHKRYHRRKSQ) show a composition bias toward basic residues. The span at 533-542 (GRGSSCSSSE) shows a compositional bias: low complexity. Arginine 534 bears the Omega-N-methylarginine mark. Positions 549–558 (ESRRRLDKDS) are enriched in basic and acidic residues. 2 stretches are compositionally biased toward gly residues: residues 575 to 592 (GSEGDGGGQSKPSSGGGV) and 600 to 614 (QGTGGGSQGGSGGTP). A Phosphoserine modification is found at serine 606. Residues 629–640 (SSSPSPASASAA) are compositionally biased toward low complexity.

Belongs to the protein kinase superfamily. CAMK Ser/Thr protein kinase family. Mg(2+) is required as a cofactor. In terms of processing, autophosphorylated. Phosphorylation on Thr-173 by STK11/LKB1 in complex with STE20-related adapter-alpha (STRADA) pseudo kinase and CAB39. Ubiquitously expressed in all tissues examined.

The protein resides in the nucleus. It catalyses the reaction L-seryl-[protein] + ATP = O-phospho-L-seryl-[protein] + ADP + H(+). The catalysed reaction is L-threonyl-[protein] + ATP = O-phospho-L-threonyl-[protein] + ADP + H(+). Activated by phosphorylation on Thr-173. In terms of biological role, may play a role in hematopoietic cell proliferation or differentiation. Potential mediator of neuronal apoptosis. The sequence is that of SNF-related serine/threonine-protein kinase from Mus musculus (Mouse).